Reading from the N-terminus, the 265-residue chain is Ribosomal RNA small subunit methyltransferase A (265 aa).

S-adenosyl-L-methionine-binding residues include Asn-13, Leu-15, Gly-40, Glu-61, Asp-85, and Asn-103.

It belongs to the class I-like SAM-binding methyltransferase superfamily. rRNA adenine N(6)-methyltransferase family. RsmA subfamily.

Its subcellular location is the cytoplasm. The enzyme catalyses adenosine(1518)/adenosine(1519) in 16S rRNA + 4 S-adenosyl-L-methionine = N(6)-dimethyladenosine(1518)/N(6)-dimethyladenosine(1519) in 16S rRNA + 4 S-adenosyl-L-homocysteine + 4 H(+). In terms of biological role, specifically dimethylates two adjacent adenosines (A1518 and A1519) in the loop of a conserved hairpin near the 3'-end of 16S rRNA in the 30S particle. May play a critical role in biogenesis of 30S subunits. In Aromatoleum aromaticum (strain DSM 19018 / LMG 30748 / EbN1) (Azoarcus sp. (strain EbN1)), this protein is Ribosomal RNA small subunit methyltransferase A.